The chain runs to 567 residues: Laccase-3 (567 aa).

A signal peptide spans 1–24; it reads MASSSSSRLLFLLSCSVLALLAGA. 2 Plastocyanin-like domains span residues 32–148 and 158–310; these read IVQE…PREN and REVP…YDCG. Asn-78 carries N-linked (GlcNAc...) asparagine glycosylation. 4 residues coordinate Cu cation: His-82, His-84, His-127, and His-129. 7 N-linked (GlcNAc...) asparagine glycosylation sites follow: Asn-148, Asn-187, Asn-203, Asn-298, Asn-330, Asn-379, and Asn-389. One can recognise a Plastocyanin-like 3 domain in the interval 415-551; sequence DFPAYPPVQF…AMAFLVEDGY (137 aa). 7 residues coordinate Cu cation: His-468, His-471, His-473, His-530, Cys-531, His-532, and His-536.

Belongs to the multicopper oxidase family. Cu cation is required as a cofactor.

The protein localises to the secreted. It localises to the extracellular space. The protein resides in the apoplast. It carries out the reaction 4 hydroquinone + O2 = 4 benzosemiquinone + 2 H2O. In terms of biological role, lignin degradation and detoxification of lignin-derived products. The sequence is that of Laccase-3 (LAC3) from Oryza sativa subsp. japonica (Rice).